Consider the following 125-residue polypeptide: MGFVKVVKNKAYFKRYQVKFRRRREGKTDYYARKRLVIQDKNKYNTPKYRMIVRVTNRDIICQIAYARIEGDMIVCAAYAHELPKYGVKVGLTNYAAAYCTGLLLARRLLNRFGMXKIYGGQVEV.

N-acetylglycine is present on Gly-2. Lys-5 and Lys-48 each carry N6-acetyllysine.

Belongs to the universal ribosomal protein uL18 family. In terms of assembly, component of the large ribosomal subunit (LSU). Part of the 5S RNP complex, which is a LSU subcomplex composed of the 5S RNA, RPL5 and RPL11. Component of a hexameric 5S RNP precursor complex, composed of 5S RNA, RRS1, RPF2/BXDC1, RPL5, RPL11 and HEATR3; this complex acts as a precursor for ribosome assembly. Interacts with NVL in an ATP-dependent manner. Interacts with RRP1B. Interacts with IPO5, IPO7 and KPNB1; these interactions may be involved in RPL5 nuclear import for the assembly of ribosomal subunits. Interacts with RRP1B.

The protein localises to the cytoplasm. It is found in the nucleus. Its subcellular location is the nucleolus. In terms of biological role, component of the ribosome, a large ribonucleoprotein complex responsible for the synthesis of proteins in the cell. The small ribosomal subunit (SSU) binds messenger RNAs (mRNAs) and translates the encoded message by selecting cognate aminoacyl-transfer RNA (tRNA) molecules. The large subunit (LSU) contains the ribosomal catalytic site termed the peptidyl transferase center (PTC), which catalyzes the formation of peptide bonds, thereby polymerizing the amino acids delivered by tRNAs into a polypeptide chain. The nascent polypeptides leave the ribosome through a tunnel in the LSU and interact with protein factors that function in enzymatic processing, targeting, and the membrane insertion of nascent chains at the exit of the ribosomal tunnel. As part of the 5S RNP/5S ribonucleoprotein particle it is an essential component of the LSU, required for its formation and the maturation of rRNAs. It also couples ribosome biogenesis to p53/TP53 activation. As part of the 5S RNP it accumulates in the nucleoplasm and inhibits MDM2, when ribosome biogenesis is perturbed, mediating the stabilization and the activation of TP53. This is Large ribosomal subunit protein uL18 (RPL5) from Sus scrofa (Pig).